The sequence spans 127 residues: Glycine cleavage system H protein (127 aa).

The Lipoyl-binding domain maps to 24-106 (TATIGITDYA…YAEGWMLKLK (83 aa)). Residue lysine 65 is modified to N6-lipoyllysine.

The protein belongs to the GcvH family. As to quaternary structure, the glycine cleavage system is composed of four proteins: P, T, L and H. (R)-lipoate serves as cofactor.

In terms of biological role, the glycine cleavage system catalyzes the degradation of glycine. The H protein shuttles the methylamine group of glycine from the P protein to the T protein. In Opitutus terrae (strain DSM 11246 / JCM 15787 / PB90-1), this protein is Glycine cleavage system H protein.